Here is a 271-residue protein sequence, read N- to C-terminus: Rhomboid-type serine protease 2 (271 aa).

6 helical membrane-spanning segments follow: residues 16-36 (GLAV…NLVY), 64-84 (HLSF…IVMF), 89-111 (GTLY…YCLI), 115-137 (LFPN…YFAV), 152-172 (FSFP…LLAP), and 176-196 (LPGH…ENWV). The active-site Nucleophile is the S125. The active site involves H179. A disordered region spans residues 252-271 (HNTDTPAEPTFQGNGRVLGN).

This sequence belongs to the peptidase S54 family.

The protein resides in the golgi apparatus membrane. Its subcellular location is the golgi apparatus. The protein localises to the cis-Golgi network membrane. The catalysed reaction is Cleaves type-1 transmembrane domains using a catalytic dyad composed of serine and histidine that are contributed by different transmembrane domains.. Functionally, probable rhomboid-type serine protease that catalyzes intramembrane proteolysis. The polypeptide is Rhomboid-type serine protease 2 (RBD2) (Kluyveromyces lactis (strain ATCC 8585 / CBS 2359 / DSM 70799 / NBRC 1267 / NRRL Y-1140 / WM37) (Yeast)).